The primary structure comprises 114 residues: UPF0102 protein HPG27_782 (114 aa).

Belongs to the UPF0102 family.

This chain is UPF0102 protein HPG27_782, found in Helicobacter pylori (strain G27).